A 416-amino-acid chain; its full sequence is Glutamyl-tRNA reductase 1 (416 aa).

Substrate is bound by residues 57–60 (TCNR), Ser113, 118–120 (DFE), and Gln124. Cys58 functions as the Nucleophile in the catalytic mechanism. NADP(+) is bound at residue 193 to 198 (GTGKIG).

The protein belongs to the glutamyl-tRNA reductase family. As to quaternary structure, homodimer.

It carries out the reaction (S)-4-amino-5-oxopentanoate + tRNA(Glu) + NADP(+) = L-glutamyl-tRNA(Glu) + NADPH + H(+). The protein operates within porphyrin-containing compound metabolism; protoporphyrin-IX biosynthesis; 5-aminolevulinate from L-glutamyl-tRNA(Glu): step 1/2. In terms of biological role, catalyzes the NADPH-dependent reduction of glutamyl-tRNA(Glu) to glutamate 1-semialdehyde (GSA). The sequence is that of Glutamyl-tRNA reductase 1 from Flavobacterium johnsoniae (strain ATCC 17061 / DSM 2064 / JCM 8514 / BCRC 14874 / CCUG 350202 / NBRC 14942 / NCIMB 11054 / UW101) (Cytophaga johnsonae).